We begin with the raw amino-acid sequence, 470 residues long: Acetyl-CoA decarbonylase/synthase complex subunit beta 2 (470 aa).

Positions 190, 193, 279, and 281 each coordinate [Ni-Fe-S] cluster.

This sequence belongs to the CdhC family. Monomer. The ACDS complex is made up of alpha, epsilon, beta, gamma and delta chains with a probable stoichiometry of (alpha(2)epsilon(2))(4)-beta(8)-(gamma(1)delta(1))(8) (Potential). Requires [Ni-Fe-S] cluster as cofactor.

It catalyses the reaction Co(I)-[corrinoid Fe-S protein] + acetyl-CoA + H(+) = methyl-Co(III)-[corrinoid Fe-S protein] + CO + CoA. It functions in the pathway one-carbon metabolism; methanogenesis from acetate. Part of a complex that catalyzes the reversible cleavage of acetyl-CoA, allowing growth on acetate as sole source of carbon and energy. The alpha-epsilon complex generates CO from CO(2), while the beta subunit (this protein) combines the CO with CoA and a methyl group to form acetyl-CoA. The methyl group, which is incorporated into acetyl-CoA, is transferred to the beta subunit by a corrinoid iron-sulfur protein (the gamma-delta complex). This is Acetyl-CoA decarbonylase/synthase complex subunit beta 2 (cdhC2) from Methanosarcina mazei (strain ATCC BAA-159 / DSM 3647 / Goe1 / Go1 / JCM 11833 / OCM 88) (Methanosarcina frisia).